The primary structure comprises 173 residues: Translation initiation factor IF-3 (173 aa).

The protein belongs to the IF-3 family. In terms of assembly, monomer.

The protein resides in the cytoplasm. Its function is as follows. IF-3 binds to the 30S ribosomal subunit and shifts the equilibrium between 70S ribosomes and their 50S and 30S subunits in favor of the free subunits, thus enhancing the availability of 30S subunits on which protein synthesis initiation begins. The protein is Translation initiation factor IF-3 of Bacillus subtilis (strain 168).